The primary structure comprises 87 residues: Protein U62 (87 aa).

This sequence belongs to the herpesviridae UL91 family.

The sequence is that of Protein U62 (U62) from Human herpesvirus 6B (strain Z29) (HHV-6 variant B).